Here is a 155-residue protein sequence, read N- to C-terminus: Methylated-DNA--protein-cysteine methyltransferase (155 aa).

C119 (nucleophile; methyl group acceptor) is an active-site residue.

It belongs to the MGMT family.

The protein resides in the cytoplasm. The enzyme catalyses a 6-O-methyl-2'-deoxyguanosine in DNA + L-cysteinyl-[protein] = S-methyl-L-cysteinyl-[protein] + a 2'-deoxyguanosine in DNA. It catalyses the reaction a 4-O-methyl-thymidine in DNA + L-cysteinyl-[protein] = a thymidine in DNA + S-methyl-L-cysteinyl-[protein]. Its function is as follows. Involved in the cellular defense against the biological effects of O6-methylguanine (O6-MeG) and O4-methylthymine (O4-MeT) in DNA. Repairs the methylated nucleobase in DNA by stoichiometrically transferring the methyl group to a cysteine residue in the enzyme. This is a suicide reaction: the enzyme is irreversibly inactivated. This chain is Methylated-DNA--protein-cysteine methyltransferase, found in Sulfolobus acidocaldarius (strain ATCC 33909 / DSM 639 / JCM 8929 / NBRC 15157 / NCIMB 11770).